The following is a 181-amino-acid chain: MSVEVANETEWQLDPKVFSELGLWVMHQMRVSTQSELTITFVDPEPIAELHERWMDLQGPTDVMSFPMDELRPGDERNEPEGMLGDIVICPWVAQQQAQAAGHSTMEEMMLLTIHGVLHLLGYDHHTREQERQMFGLQRQLLLTFFALHHGTAWSATLPSGSVNELEVYERKYGTNRELGH.

Residues histidine 115, histidine 119, and histidine 125 each contribute to the Zn(2+) site.

It belongs to the endoribonuclease YbeY family. It depends on Zn(2+) as a cofactor.

Its subcellular location is the cytoplasm. Single strand-specific metallo-endoribonuclease involved in late-stage 70S ribosome quality control and in maturation of the 3' terminus of the 16S rRNA. In Bifidobacterium animalis subsp. lactis (strain AD011), this protein is Endoribonuclease YbeY.